We begin with the raw amino-acid sequence, 93 residues long: Putative regulatory protein LBL_1834 (93 aa).

It belongs to the RemA family.

This Leptospira borgpetersenii serovar Hardjo-bovis (strain L550) protein is Putative regulatory protein LBL_1834.